Here is a 446-residue protein sequence, read N- to C-terminus: N-succinylarginine dihydrolase (446 aa).

Substrate contacts are provided by residues 21–30 (AGLSWGNVAS), N112, and 139–140 (HR). E176 is a catalytic residue. R216 contributes to the substrate binding site. H252 is an active-site residue. The substrate site is built by D254 and N364. Residue C370 is the Nucleophile of the active site.

The protein belongs to the succinylarginine dihydrolase family. Homodimer.

The catalysed reaction is N(2)-succinyl-L-arginine + 2 H2O + 2 H(+) = N(2)-succinyl-L-ornithine + 2 NH4(+) + CO2. It participates in amino-acid degradation; L-arginine degradation via AST pathway; L-glutamate and succinate from L-arginine: step 2/5. Functionally, catalyzes the hydrolysis of N(2)-succinylarginine into N(2)-succinylornithine, ammonia and CO(2). The polypeptide is N-succinylarginine dihydrolase (Marinobacter nauticus (strain ATCC 700491 / DSM 11845 / VT8) (Marinobacter aquaeolei)).